The primary structure comprises 84 residues: Small ribosomal subunit protein uS17 (84 aa).

The protein belongs to the universal ribosomal protein uS17 family. As to quaternary structure, part of the 30S ribosomal subunit.

Functionally, one of the primary rRNA binding proteins, it binds specifically to the 5'-end of 16S ribosomal RNA. This chain is Small ribosomal subunit protein uS17, found in Klebsiella pneumoniae subsp. pneumoniae (strain ATCC 700721 / MGH 78578).